Reading from the N-terminus, the 143-residue chain is Large ribosomal subunit protein uL16c (143 aa).

The protein belongs to the universal ribosomal protein uL16 family. Part of the 50S ribosomal subunit.

It is found in the plastid. Its subcellular location is the chloroplast. The chain is Large ribosomal subunit protein uL16c from Spirogyra maxima (Green alga).